The following is an 81-amino-acid chain: Type III secretion regulatory protein ExsE (81 aa).

The interval 55–81 (DPRSEQALQRLADGDGTPLEARTVRRR) is disordered.

In terms of assembly, interacts with ExsC.

It localises to the cytoplasm. It is found in the secreted. Its function is as follows. Acts as a negative regulator of the type III secretion regulon (T3SS) expression. In the absence of inducing signals such as low Ca(2+) or host cell contact, the T3SS/injectisome is expressed at a low basal level and exists in a quiescent state due to ExsA sequestration by ExsD. ExsE binding to ExsC disrupts the complex between ExsC and ExsD, thereby allowing free ExsD to bind ExsA. Upon inducing signal, ExsE is secreted allowing ExsC to bind ExsD. In turn, ExsD cannot bind ExsA and prevent ExsA-mediated transcriptional activation of the type III secretion system. In Pseudomonas aeruginosa (strain ATCC 15692 / DSM 22644 / CIP 104116 / JCM 14847 / LMG 12228 / 1C / PRS 101 / PAO1), this protein is Type III secretion regulatory protein ExsE (exsE).